Reading from the N-terminus, the 338-residue chain is Fructose-1,6-bisphosphatase class 1 1 (338 aa).

E91, D113, L115, and D116 together coordinate Mg(2+). Substrate-binding positions include 116 to 119 (DGSS), N208, and K274. E280 contributes to the Mg(2+) binding site.

This sequence belongs to the FBPase class 1 family. As to quaternary structure, homotetramer. Requires Mg(2+) as cofactor.

It localises to the cytoplasm. The catalysed reaction is beta-D-fructose 1,6-bisphosphate + H2O = beta-D-fructose 6-phosphate + phosphate. It functions in the pathway carbohydrate biosynthesis; gluconeogenesis. This Cupriavidus necator (strain ATCC 17699 / DSM 428 / KCTC 22496 / NCIMB 10442 / H16 / Stanier 337) (Ralstonia eutropha) protein is Fructose-1,6-bisphosphatase class 1 1.